A 519-amino-acid polypeptide reads, in one-letter code: Cytochrome P450 52A13 (519 aa).

A heme-binding site is contributed by Cys466.

The protein belongs to the cytochrome P450 family. Requires heme as cofactor.

The protein resides in the membrane. Together with an NADPH cytochrome P450 the enzyme system catalyzes the terminal hydroxylation as the first step in the assimilation of alkanes and fatty acids. In Debaryomyces hansenii (Yeast), this protein is Cytochrome P450 52A13 (CYP52A13).